We begin with the raw amino-acid sequence, 267 residues long: Phosphate import ATP-binding protein PstB 1 (267 aa).

The 242-residue stretch at leucine 21–valine 262 folds into the ABC transporter domain. An ATP-binding site is contributed by glycine 53–serine 60.

It belongs to the ABC transporter superfamily. Phosphate importer (TC 3.A.1.7) family. In terms of assembly, the complex is composed of two ATP-binding proteins (PstB), two transmembrane proteins (PstC and PstA) and a solute-binding protein (PstS).

The protein localises to the cell membrane. It catalyses the reaction phosphate(out) + ATP + H2O = ADP + 2 phosphate(in) + H(+). Functionally, part of the ABC transporter complex PstSACB involved in phosphate import. Responsible for energy coupling to the transport system. The polypeptide is Phosphate import ATP-binding protein PstB 1 (Streptococcus thermophilus (strain CNRZ 1066)).